Consider the following 168-residue polypeptide: S-ribosylhomocysteine lyase (168 aa).

Fe cation-binding residues include His54, His58, and Cys128.

The protein belongs to the LuxS family. In terms of assembly, homodimer. Fe cation is required as a cofactor.

The catalysed reaction is S-(5-deoxy-D-ribos-5-yl)-L-homocysteine = (S)-4,5-dihydroxypentane-2,3-dione + L-homocysteine. Involved in the synthesis of autoinducer 2 (AI-2) which is secreted by bacteria and is used to communicate both the cell density and the metabolic potential of the environment. The regulation of gene expression in response to changes in cell density is called quorum sensing. Catalyzes the transformation of S-ribosylhomocysteine (RHC) to homocysteine (HC) and 4,5-dihydroxy-2,3-pentadione (DPD). This is S-ribosylhomocysteine lyase from Neisseria meningitidis serogroup C (strain 053442).